A 510-amino-acid polypeptide reads, in one-letter code: MAHRRLIMTMTKMMMMVTMMMMMDKTCICADISRGSFPKGFVFGTASSAFQHEGAVKAEGRGPTIWDTFSHTFGKITDFSNADVAVDQYHRYEEDVQLMKNMGMDAYRFSISWTRIFPNGVGHINEAGIDHYNKLINALLAKGIEPYVTLYHWDLPQALHDRYLGWLNPQIINDFAAYAEVCFQRFGDRVKHWITFNEPHTFAIQGYDVGLQAPGRCTILFKLTCREGNSSTEPYIVGHNVILTHATVSDIYRKKYKAKQGGSLGIAFDVMWFEPESNKTEDIEAAQRAQDFQLGWFLDPLMFGDYPSSMRSRVGSRLPVFTGSQSSLVKGSLDFVGINHYTTYYARNNATNLIGTLLHDAVSDSGTVTLPFKGLSTIGDRASSIWLYIVPRGMRSLMNYIKHRYGNPPVFITENGMDDPNSILISRKDALKDAKRIKYHHDYLSSLQASIKEDGCNVKGYFVWSLLDNWEWAAGYSSRFGLYFVDYRDNLKRYPKDSVHWFTSFLNSTS.

An N-terminal signal peptide occupies residues 1 to 29 (MAHRRLIMTMTKMMMMVTMMMMMDKTCIC). Residues glutamine 51, histidine 152, and 197–198 (NE) contribute to the a beta-D-glucoside site. Glutamate 198 acts as the Proton donor in catalysis. Cysteines 217 and 225 form a disulfide. N-linked (GlcNAc...) asparagine glycans are attached at residues asparagine 229 and asparagine 278. Tyrosine 341 provides a ligand contact to a beta-D-glucoside. The N-linked (GlcNAc...) asparagine glycan is linked to asparagine 349. A beta-D-glucoside-binding positions include glutamate 414, tryptophan 464, 471–472 (EW), and phenylalanine 480. Glutamate 414 acts as the Nucleophile in catalysis. The N-linked (GlcNAc...) asparagine glycan is linked to asparagine 507.

The protein belongs to the glycosyl hydrolase 1 family.

It catalyses the reaction Hydrolysis of terminal, non-reducing beta-D-glucosyl residues with release of beta-D-glucose.. The protein is Beta-glucosidase 40 of Arabidopsis thaliana (Mouse-ear cress).